A 168-amino-acid polypeptide reads, in one-letter code: 2-C-methyl-D-erythritol 2,4-cyclodiphosphate synthase (168 aa).

Asp8 and His10 together coordinate a divalent metal cation. 4-CDP-2-C-methyl-D-erythritol 2-phosphate contacts are provided by residues 8-10 (DLH) and 34-35 (HS). His42 is a binding site for a divalent metal cation. 4-CDP-2-C-methyl-D-erythritol 2-phosphate contacts are provided by residues 56–58 (DIG), 61–65 (FPDTD), 132–135 (TTTE), and Arg142.

It belongs to the IspF family. Homotrimer. It depends on a divalent metal cation as a cofactor.

The catalysed reaction is 4-CDP-2-C-methyl-D-erythritol 2-phosphate = 2-C-methyl-D-erythritol 2,4-cyclic diphosphate + CMP. Its pathway is isoprenoid biosynthesis; isopentenyl diphosphate biosynthesis via DXP pathway; isopentenyl diphosphate from 1-deoxy-D-xylulose 5-phosphate: step 4/6. Involved in the biosynthesis of isopentenyl diphosphate (IPP) and dimethylallyl diphosphate (DMAPP), two major building blocks of isoprenoid compounds. Catalyzes the conversion of 4-diphosphocytidyl-2-C-methyl-D-erythritol 2-phosphate (CDP-ME2P) to 2-C-methyl-D-erythritol 2,4-cyclodiphosphate (ME-CPP) with a corresponding release of cytidine 5-monophosphate (CMP). The sequence is that of 2-C-methyl-D-erythritol 2,4-cyclodiphosphate synthase from Desulfosudis oleivorans (strain DSM 6200 / JCM 39069 / Hxd3) (Desulfococcus oleovorans).